The chain runs to 192 residues: Putative manganese efflux pump MntP (192 aa).

Helical transmembrane passes span 2-22, 41-61, 62-82, 109-129, 136-156, and 172-192; these read IAII…AFAV, SALW…YAAS, AFSA…LAFI, MLPL…SLAF, FAIL…LYIG, and GVVL…VIAF.

It belongs to the MntP (TC 9.B.29) family.

It is found in the cell membrane. Functionally, probably functions as a manganese efflux pump. In Bifidobacterium longum subsp. infantis (strain ATCC 15697 / DSM 20088 / JCM 1222 / NCTC 11817 / S12), this protein is Putative manganese efflux pump MntP.